We begin with the raw amino-acid sequence, 383 residues long: Protein salvador homolog 1 (383 aa).

Phosphoserine is present on residues S94 and S136. 2 consecutive WW domains span residues 199-232 (LPLP…HPLE) and 234-267 (EGLP…HPCA). The residue at position 210 (T210) is a Phosphothreonine. The 48-residue stretch at 321–368 (ILKWELFQLADLDTYQGMLKLLFMKELEQIVKMYEAYRQALLTELENR) folds into the SARAH domain. Residues 344–373 (MKELEQIVKMYEAYRQALLTELENRKQRQQ) are a coiled coil.

In terms of assembly, homodimer. Stabilized through interaction with STK3/MST2 or STK4/MST1. Interacts (via SARAH domain) with isoform 1 of NEK2. Interacts with ESR1 only in the presence of STK3/MST2. Interacts with WTIP and AJUBA. Post-translationally, phosphorylated by STK3/MST2 and STK4/MST1. Phosphorylation is not required for SAV1 stability and may increase the number of protein binding sites on the scaffold molecule. In terms of tissue distribution, ubiquitously expressed in adult tissues with highest expression in the pancreas, aorta and interventricular septum and lowest expression in skeletal muscle. Expression was higher in fetal than in the adult heart. Expressed in various cell lines.

It localises to the nucleus. The protein localises to the cytoplasm. Its function is as follows. Regulator of STK3/MST2 and STK4/MST1 in the Hippo signaling pathway which plays a pivotal role in organ size control and tumor suppression by restricting proliferation and promoting apoptosis. The core of this pathway is composed of a kinase cascade wherein STK3/MST2 and STK4/MST1, in complex with its regulatory protein SAV1, phosphorylates and activates LATS1/2 in complex with its regulatory protein MOB1, which in turn phosphorylates and inactivates YAP1 oncoprotein and WWTR1/TAZ. Phosphorylation of YAP1 by LATS1/2 inhibits its translocation into the nucleus to regulate cellular genes important for cell proliferation, cell death, and cell migration. SAV1 is required for STK3/MST2 and STK4/MST1 activation and promotes cell-cycle exit and terminal differentiation in developing epithelial tissues. Plays a role in centrosome disjunction by regulating the localization of NEK2 to centrosomes, and its ability to phosphorylate CROCC and CEP250. In conjunction with STK3/MST2, activates the transcriptional activity of ESR1 through the modulation of its phosphorylation. The polypeptide is Protein salvador homolog 1 (Homo sapiens (Human)).